The following is a 483-amino-acid chain: UDP-N-acetylmuramyl-tripeptide synthetase (483 aa).

Ser43 contacts UDP-N-acetyl-alpha-D-muramoyl-L-alanyl-D-glutamate. Residue 116–122 (GTKGKTT) participates in ATP binding. Residues 160-161 (TT), Ser187, and Arg195 each bind UDP-N-acetyl-alpha-D-muramoyl-L-alanyl-D-glutamate. N6-carboxylysine is present on Lys229.

Belongs to the MurCDEF family. MurE subfamily. Post-translationally, carboxylation is probably crucial for Mg(2+) binding and, consequently, for the gamma-phosphate positioning of ATP.

It localises to the cytoplasm. It participates in cell wall biogenesis; peptidoglycan biosynthesis. Its function is as follows. Catalyzes the addition of an amino acid to the nucleotide precursor UDP-N-acetylmuramoyl-L-alanyl-D-glutamate (UMAG) in the biosynthesis of bacterial cell-wall peptidoglycan. The chain is UDP-N-acetylmuramyl-tripeptide synthetase from Lactococcus lactis subsp. cremoris (strain SK11).